We begin with the raw amino-acid sequence, 323 residues long: Acetyl-coenzyme A carboxylase carboxyl transferase subunit alpha (323 aa).

In terms of domain architecture, CoA carboxyltransferase C-terminal spans 35–296; the sequence is EVLSELDELR…GMTLKKCLDE (262 aa).

The protein belongs to the AccA family. Acetyl-CoA carboxylase is a heterohexamer composed of biotin carboxyl carrier protein (AccB), biotin carboxylase (AccC) and two subunits each of ACCase subunit alpha (AccA) and ACCase subunit beta (AccD).

Its subcellular location is the cytoplasm. It catalyses the reaction N(6)-carboxybiotinyl-L-lysyl-[protein] + acetyl-CoA = N(6)-biotinyl-L-lysyl-[protein] + malonyl-CoA. Its pathway is lipid metabolism; malonyl-CoA biosynthesis; malonyl-CoA from acetyl-CoA: step 1/1. Functionally, component of the acetyl coenzyme A carboxylase (ACC) complex. First, biotin carboxylase catalyzes the carboxylation of biotin on its carrier protein (BCCP) and then the CO(2) group is transferred by the carboxyltransferase to acetyl-CoA to form malonyl-CoA. This is Acetyl-coenzyme A carboxylase carboxyl transferase subunit alpha from Aquifex aeolicus (strain VF5).